The following is a 523-amino-acid chain: Heparanase (523 aa).

The signal sequence occupies residues 1-18 (MLVLLLLVLLLAVPPRRT). Residues 42 to 44 (DAS), T77, and 137 to 141 (KKHKN) each bind heparan sulfate group. N-linked (GlcNAc...) asparagine glycosylation is found at N141 and N196. The Proton donor role is filled by E204. Heparan sulfate group-binding positions include 250–260 (QPRKHTQHLLR), H276, and R283. The tract at residues 268–397 (KAIDSVTWHH…LLYKRLVGTR (130 aa)) is required for heterodimerization with the heparanase 8 kDa subunit. E323 acts as the Nucleophile in catalysis. Residues 328-330 (YGG) and 369-371 (GSY) contribute to the heparan sulfate group site. Residues C417 and C522 are joined by a disulfide bond. N-linked (GlcNAc...) asparagine glycosylation is found at N436 and N439. The segment at 507-523 (FSYGFYVIRNAKAIACI) is required for transferring proheparanase to the Golgi apparatus, secretion and subsequent enzyme activity and for enhancement of PKB/AKT1 phosphorylation.

This sequence belongs to the glycosyl hydrolase 79 family. As to quaternary structure, heterodimer; the active enzyme is a heterodimer of the 60 kDa and 45 kDa proteolytic products. Post-translationally, N-glycosylated. In terms of processing, proteolytically cleaved to produce a 60 kDa and a 45 kDa product.

Its subcellular location is the secreted. It catalyses the reaction endohydrolysis of (1-&gt;4)-beta-D-glycosidic bonds of heparan sulfate chains in heparan sulfate proteoglycan.. In terms of biological role, endoglycosidase that cleaves heparan sulfate proteoglycans (HSPGs) into heparan sulfate side chains and core proteoglycans. Participates in extracellular matrix (ECM) degradation and remodeling. Selectively cleaves the linkage between a glucuronic acid unit and an N-sulfo glucosamine unit carrying either a 3-O-sulfo or a 6-O-sulfo group. Can also cleave the linkage between a glucuronic acid unit and an N-sulfo glucosamine unit carrying a 2-O-sulfo group, but not linkages between a glucuronic acid unit and a 2-O-sulfated iduronic acid moiety. Increases cell adhesion to the extracellular matrix (ECM), independent of its enzymatic activity. In Gallus gallus (Chicken), this protein is Heparanase (HPSE).